The sequence spans 157 residues: Small ribosomal subunit protein uS7 (157 aa).

It belongs to the universal ribosomal protein uS7 family. In terms of assembly, part of the 30S ribosomal subunit. Contacts proteins S9 and S11.

One of the primary rRNA binding proteins, it binds directly to 16S rRNA where it nucleates assembly of the head domain of the 30S subunit. Is located at the subunit interface close to the decoding center, probably blocks exit of the E-site tRNA. The chain is Small ribosomal subunit protein uS7 from Acidovorax ebreus (strain TPSY) (Diaphorobacter sp. (strain TPSY)).